The sequence spans 457 residues: tRNA-2-methylthio-N(6)-dimethylallyladenosine synthase (457 aa).

In terms of domain architecture, MTTase N-terminal spans 18–133 (KKLFIETYGC…LPELIASVEA (116 aa)). Positions 27, 63, 97, 171, 175, and 178 each coordinate [4Fe-4S] cluster. The region spanning 157–390 (CGNHISGFVS…IALQNRLSAE (234 aa)) is the Radical SAM core domain. The 64-residue stretch at 393–456 (NRCIGKTYEV…SATLKGEEVF (64 aa)) folds into the TRAM domain.

The protein belongs to the methylthiotransferase family. MiaB subfamily. Monomer. [4Fe-4S] cluster is required as a cofactor.

It is found in the cytoplasm. It catalyses the reaction N(6)-dimethylallyladenosine(37) in tRNA + (sulfur carrier)-SH + AH2 + 2 S-adenosyl-L-methionine = 2-methylsulfanyl-N(6)-dimethylallyladenosine(37) in tRNA + (sulfur carrier)-H + 5'-deoxyadenosine + L-methionine + A + S-adenosyl-L-homocysteine + 2 H(+). In terms of biological role, catalyzes the methylthiolation of N6-(dimethylallyl)adenosine (i(6)A), leading to the formation of 2-methylthio-N6-(dimethylallyl)adenosine (ms(2)i(6)A) at position 37 in tRNAs that read codons beginning with uridine. In Bacteroides fragilis (strain ATCC 25285 / DSM 2151 / CCUG 4856 / JCM 11019 / LMG 10263 / NCTC 9343 / Onslow / VPI 2553 / EN-2), this protein is tRNA-2-methylthio-N(6)-dimethylallyladenosine synthase.